Consider the following 441-residue polypeptide: Xylose isomerase (441 aa).

Active-site residues include His-100 and Asp-103. Residues Glu-231, Glu-267, His-270, Asp-295, Asp-306, Asp-308, and Asp-338 each contribute to the Mg(2+) site.

The protein belongs to the xylose isomerase family. In terms of assembly, homotetramer. It depends on Mg(2+) as a cofactor.

The protein resides in the cytoplasm. The catalysed reaction is alpha-D-xylose = alpha-D-xylulofuranose. The polypeptide is Xylose isomerase (Paraburkholderia phymatum (strain DSM 17167 / CIP 108236 / LMG 21445 / STM815) (Burkholderia phymatum)).